Reading from the N-terminus, the 245-residue chain is Fibroblast growth factor 3 (245 aa).

Residues 1–17 (MGLIWLLLLSLLEPSWP) form the signal peptide. Residue Asn-65 is glycosylated (N-linked (GlcNAc...) asparagine). 2 disordered regions span residues 137-181 (GSSG…FLPR) and 195-245 (QSSQ…LAVA). A compositionally biased stretch (basic residues) spans 161–173 (GRPRRGFKTRRTQ). The segment covering 226-238 (TLSTRATPSTQLH) has biased composition (polar residues).

It belongs to the heparin-binding growth factors family. As to quaternary structure, interacts with FGFR1 and FGFR2. Affinity between fibroblast growth factors (FGFs) and their receptors is increased by heparan sulfate glycosaminoglycans that function as coreceptors. In terms of processing, glycosylated.

It localises to the nucleus. Its subcellular location is the endoplasmic reticulum. It is found in the golgi apparatus. In terms of biological role, plays an important role in the regulation of embryonic development, cell proliferation, and cell differentiation. Required for normal ear development. In Mus musculus (Mouse), this protein is Fibroblast growth factor 3 (Fgf3).